Reading from the N-terminus, the 355-residue chain is MVTPTTIRTVDLRSDTVTKPTESMRSAMANAEVDDDVLGNDPTALRLEKEVAEIAGKEAAMFVPSGTMGNLISVLVHCDERGSEVILGDDSHIHIYENGGVSSLGGVHPRTVKNEEDGTMEIGAIEAAVRSPKGDLHHPVTKLICLENTQANCGGRCLPIEYIDKVGELAKKHGLKLHIDGARIFNASVALGVPVKRIVQAADSVSICLSKGIGAPVGSVIVGSKKFITKARWLRKTLGGGMRQIGVLCAAALVALHENVAKLEDDHKKARVLAEGLNRIERLRVNVAAVETNIIYVDIPEDPKFGAEEACKSLEDVGVLVIPQATFRIRIVLHHQISDVDVEYVLSCFEKIFHS.

Position 211 is an N6-(pyridoxal phosphate)lysine (lysine 211).

This sequence belongs to the threonine aldolase family. Requires pyridoxal 5'-phosphate as cofactor. In terms of tissue distribution, expressed in roots, leaf vasculature and flowers.

It carries out the reaction L-threonine = acetaldehyde + glycine. It catalyses the reaction L-allo-threonine = acetaldehyde + glycine. It participates in amino-acid degradation; L-threonine degradation via aldolase pathway; acetaldehyde and glycine from L-threonine: step 1/1. Functionally, threonine aldolase involved in threonine degradation to glycine. May play a role in the removal of L-allo-threonine. This chain is Probable low-specificity L-threonine aldolase 2 (THA2), found in Arabidopsis thaliana (Mouse-ear cress).